The sequence spans 153 residues: 17.6 kDa class I heat shock protein (153 aa).

Positions 38 to 153 constitute a sHSP domain; that stretch reads ETAAIVNARI…PMVKAIDISG (116 aa).

Belongs to the small heat shock protein (HSP20) family. As to quaternary structure, forms oligomeric structures.

It is found in the cytoplasm. In Helianthus annuus (Common sunflower), this protein is 17.6 kDa class I heat shock protein (HSP17.6).